The following is a 197-amino-acid chain: Protein GrpE (197 aa).

The interval 1–39 (MSSKEQKTPEGQAPEEIIMDQHEEIEAVEPEASAEQVDP) is disordered.

The protein belongs to the GrpE family. In terms of assembly, homodimer.

Its subcellular location is the cytoplasm. Participates actively in the response to hyperosmotic and heat shock by preventing the aggregation of stress-denatured proteins, in association with DnaK and GrpE. It is the nucleotide exchange factor for DnaK and may function as a thermosensor. Unfolded proteins bind initially to DnaJ; upon interaction with the DnaJ-bound protein, DnaK hydrolyzes its bound ATP, resulting in the formation of a stable complex. GrpE releases ADP from DnaK; ATP binding to DnaK triggers the release of the substrate protein, thus completing the reaction cycle. Several rounds of ATP-dependent interactions between DnaJ, DnaK and GrpE are required for fully efficient folding. This Escherichia coli O127:H6 (strain E2348/69 / EPEC) protein is Protein GrpE.